A 434-amino-acid polypeptide reads, in one-letter code: ATP-dependent protease ATPase subunit HslU (434 aa).

Residues Ile-18, 60–65 (GVGKTE), Asp-247, Glu-312, and Arg-384 each bind ATP.

The protein belongs to the ClpX chaperone family. HslU subfamily. As to quaternary structure, a double ring-shaped homohexamer of HslV is capped on each side by a ring-shaped HslU homohexamer. The assembly of the HslU/HslV complex is dependent on binding of ATP.

Its subcellular location is the cytoplasm. Its function is as follows. ATPase subunit of a proteasome-like degradation complex; this subunit has chaperone activity. The binding of ATP and its subsequent hydrolysis by HslU are essential for unfolding of protein substrates subsequently hydrolyzed by HslV. HslU recognizes the N-terminal part of its protein substrates and unfolds these before they are guided to HslV for hydrolysis. This is ATP-dependent protease ATPase subunit HslU from Brucella anthropi (strain ATCC 49188 / DSM 6882 / CCUG 24695 / JCM 21032 / LMG 3331 / NBRC 15819 / NCTC 12168 / Alc 37) (Ochrobactrum anthropi).